A 126-amino-acid chain; its full sequence is Large ribosomal subunit protein bL19 (126 aa).

This sequence belongs to the bacterial ribosomal protein bL19 family.

Functionally, this protein is located at the 30S-50S ribosomal subunit interface and may play a role in the structure and function of the aminoacyl-tRNA binding site. The sequence is that of Large ribosomal subunit protein bL19 from Bradyrhizobium diazoefficiens (strain JCM 10833 / BCRC 13528 / IAM 13628 / NBRC 14792 / USDA 110).